Consider the following 235-residue polypeptide: Small ribosomal subunit protein uS3 (235 aa).

The KH type-2 domain occupies 39 to 107; that stretch reads VRLFLRKELF…PTQINIAEIR (69 aa).

It belongs to the universal ribosomal protein uS3 family. As to quaternary structure, part of the 30S ribosomal subunit. Forms a tight complex with proteins S10 and S14.

In terms of biological role, binds the lower part of the 30S subunit head. Binds mRNA in the 70S ribosome, positioning it for translation. The polypeptide is Small ribosomal subunit protein uS3 (Buchnera aphidicola subsp. Baizongia pistaciae (strain Bp)).